The following is a 348-amino-acid chain: Malyl-CoA/beta-methylmalyl-CoA/citramalyl-CoA lyase (348 aa).

Substrate contacts are provided by residues 32–33 (HF), Lys40, and Arg92. Residues Glu157 and Asp184 each contribute to the Mg(2+) site. Substrate is bound by residues 183-184 (AD) and Leu274.

It belongs to the HpcH/HpaI aldolase family. In terms of assembly, homohexamer. Dimer of trimers. Mg(2+) serves as cofactor. The cofactor is Mn(2+).

The enzyme catalyses (S)-malyl-CoA = glyoxylate + acetyl-CoA. It carries out the reaction (2R,3S)-beta-methylmalyl-CoA = propanoyl-CoA + glyoxylate. The catalysed reaction is (3S)-citramalyl-CoA = pyruvate + acetyl-CoA. Inhibited by oxalate. In terms of biological role, involved in the 3-hydroxypropionate cycle used for autotrophic carbon dioxide fixation, and in the glyoxylate assimilation cycle used to regenerate acetyl-CoA and produce pyruvate as universal precursor for biosynthesis. As a part of the 3-hydroxypropionate cycle, it catalyzes the cleavage of (S)-malyl-CoA to yield acetyl-CoA and glyoxylate. As part of the glyoxylate assimilation cycle, it catalyzes the condensation of glyoxylate with propionyl-CoA to yield (2R,3S)-beta-methylmalyl-CoA, and catalyzes the cleavage of (S)-citramalyl-CoA to yield acetyl-CoA and pyruvate. This is Malyl-CoA/beta-methylmalyl-CoA/citramalyl-CoA lyase (mcl) from Chloroflexus aurantiacus.